The primary structure comprises 264 residues: Thymidylate synthase (264 aa).

Arg-21 lines the dUMP pocket. His-51 is a (6R)-5,10-methylene-5,6,7,8-tetrahydrofolate binding site. 126–127 contacts dUMP; it reads RR. Residue Cys-146 is the Nucleophile of the active site. DUMP-binding positions include 166 to 169, Asn-177, and 207 to 209; these read RSAD and HLY. A (6R)-5,10-methylene-5,6,7,8-tetrahydrofolate-binding site is contributed by Asp-169. Position 263 (Ala-263) interacts with (6R)-5,10-methylene-5,6,7,8-tetrahydrofolate.

The protein belongs to the thymidylate synthase family. Bacterial-type ThyA subfamily. Homodimer.

Its subcellular location is the cytoplasm. The enzyme catalyses dUMP + (6R)-5,10-methylene-5,6,7,8-tetrahydrofolate = 7,8-dihydrofolate + dTMP. It participates in pyrimidine metabolism; dTTP biosynthesis. In terms of biological role, catalyzes the reductive methylation of 2'-deoxyuridine-5'-monophosphate (dUMP) to 2'-deoxythymidine-5'-monophosphate (dTMP) while utilizing 5,10-methylenetetrahydrofolate (mTHF) as the methyl donor and reductant in the reaction, yielding dihydrofolate (DHF) as a by-product. This enzymatic reaction provides an intracellular de novo source of dTMP, an essential precursor for DNA biosynthesis. The chain is Thymidylate synthase from Chelativorans sp. (strain BNC1).